Consider the following 66-residue polypeptide: Light-harvesting protein B-800-850 alpha chain B (66 aa).

Residues 1-11 (MNQGRIWTVVN) lie on the Cytoplasmic side of the membrane. Residues 12 to 35 (PGVGLPLLLGSVTVIAILVHYAVL) form a helical membrane-spanning segment. Position 31 (His31) interacts with a bacteriochlorophyll. Residues 36–66 (SNTTWFPKYWNGATVAAPAAAPAPAAPAAKK) lie on the Periplasmic side of the membrane.

It belongs to the antenna complex alpha subunit family. The core complex is formed by different alpha and beta chains, binding bacteriochlorophyll molecules, and arranged most probably in tetrameric structures disposed around the reaction center. The non-pigmented gamma chains may constitute additional components.

It is found in the cell inner membrane. Antenna complexes are light-harvesting systems, which transfer the excitation energy to the reaction centers. In Rhodopseudomonas palustris (strain ATCC BAA-98 / CGA009), this protein is Light-harvesting protein B-800-850 alpha chain B (pucAB).